A 429-amino-acid polypeptide reads, in one-letter code: Keratin, type I cytoskeletal 18 (429 aa).

The segment at 2–78 (SYSRSVYSSS…NVNLIGGGQN (77 aa)) is head. Residues 79-114 (EKETMQDLNDRLASYLERVRSLEAANKKLEVQIRQH) are coil 1A. The 311-residue stretch at 79 to 389 (EKETMQDLND…RLLEGDGSFD (311 aa)) folds into the IF rod domain. Residues 115–130 (TEKKGPSKDWSPYYKT) form a linker 1 region. Residues 131–222 (IEDLRKQVFD…KNHQDDVTEL (92 aa)) form a coil 1B region. Positions 223–246 (QAQVARSAVTVEVDAPKSQDLGKI) are linker 12. The coil 2 stretch occupies residues 247–385 (MTELRAQYDG…HTYRRLLEGD (139 aa)). The tail stretch occupies residues 386-429 (GSFDLQDAVPTVTTQTVKKVITTTQRIVDGKVVSESNDTEVLKS).

This sequence belongs to the intermediate filament family. Heterotetramer of two type I and two type II keratins. Keratin-18 associates with keratin-8. In terms of processing, phosphorylated. Post-translationally, proteolytically cleaved by caspases during epithelial cell apoptosis.

Its function is as follows. When phosphorylated, plays a role in filament reorganization. The chain is Keratin, type I cytoskeletal 18 from Xenopus tropicalis (Western clawed frog).